The chain runs to 677 residues: MADTCFRLHTEFEPTGDQPEAIGQIVANLGQGVRDQVLLGVTGSGKTFTVANVIAACNRPALILAPNKTLAAQLYNEFRALFPDNAVEYFVSYYDYYQPEAYVPASDTYIEKDSSINDNIDKLRHAATHALLTRRDVVIVASVSCIYGLGSPEYYARLVIPVECGQRFSMDALMTRLVEVQYQRNDFDFHRGTFRVRGDVLEVIPAYHHERALRIEFFGDDIDAISEIDPLTGEVLGSVGKTVIYPASHYVSDRDNLVRAMSDIRDELGERLREYQSANRLVEAQRLEQRTMLDLEMMEELGYCNGIENYSRHLDGRAAGQPPSCLLDYFPDDFLLFVDESHITVPQVGAMYKGDRSRKSTLVDFGFRLPSALDNRPLEFAEFLTRINQTVYVSATPGKWELDRSQGVIAEQIIRPTGLVDPVVEVRPTRGQVDDLLAECRARAARDERVLITTLTKRMAEDLTEHLGNMGLSVRYLHSDIDTMERMAIIQALRRGECDVLVGINLLREGLDIPEVSLVSILDADKEGFLRSTGSLIQTFGRAARNAAGRVILYADTVTASMRAAMDETARRRERQQAWNEANGIEPRTIRKSLDTPFDAIYSAASEGGKGRGRGRGRQAAPAVENVAEYGTSPEDMAKHIQKLEREMREAAKELEFERAATLRDRIRLLRERLIEA.

In terms of domain architecture, Helicase ATP-binding spans 27–192; that stretch reads ANLGQGVRDQ…QRNDFDFHRG (166 aa). 40–47 contributes to the ATP binding site; sequence GVTGSGKT. The Beta-hairpin motif lies at 93–116; that stretch reads YYDYYQPEAYVPASDTYIEKDSSI. The 163-residue stretch at 432–594 folds into the Helicase C-terminal domain; sequence QVDDLLAECR…IEPRTIRKSL (163 aa). Residues 638–673 form the UVR domain; that stretch reads AKHIQKLEREMREAAKELEFERAATLRDRIRLLRER.

It belongs to the UvrB family. In terms of assembly, forms a heterotetramer with UvrA during the search for lesions. Interacts with UvrC in an incision complex.

It localises to the cytoplasm. Functionally, the UvrABC repair system catalyzes the recognition and processing of DNA lesions. A damage recognition complex composed of 2 UvrA and 2 UvrB subunits scans DNA for abnormalities. Upon binding of the UvrA(2)B(2) complex to a putative damaged site, the DNA wraps around one UvrB monomer. DNA wrap is dependent on ATP binding by UvrB and probably causes local melting of the DNA helix, facilitating insertion of UvrB beta-hairpin between the DNA strands. Then UvrB probes one DNA strand for the presence of a lesion. If a lesion is found the UvrA subunits dissociate and the UvrB-DNA preincision complex is formed. This complex is subsequently bound by UvrC and the second UvrB is released. If no lesion is found, the DNA wraps around the other UvrB subunit that will check the other stand for damage. The polypeptide is UvrABC system protein B (Nitratidesulfovibrio vulgaris (strain DP4) (Desulfovibrio vulgaris)).